The chain runs to 201 residues: Alpha-1-acid glycoprotein (201 aa).

The first 18 residues, 1 to 18 (MALPWALAVLSLLPLLHA), serve as a signal peptide directing secretion. N-linked (GlcNAc...) asparagine glycans are attached at residues Asn25, Asn33, Asn87, Asn93, Asn103, and Asn169. Cys90 and Cys183 are disulfide-bonded.

The protein belongs to the calycin superfamily. Lipocalin family.

It is found in the secreted. Functionally, functions as a transport protein in the blood stream. Binds various ligands in the interior of its beta-barrel domain. Appears to function in modulating the activity of the immune system during the acute-phase reaction. This is Alpha-1-acid glycoprotein (ORM1) from Oryctolagus cuniculus (Rabbit).